The sequence spans 387 residues: Probable tRNA sulfurtransferase (387 aa).

One can recognise a THUMP domain in the interval 67 to 167 (SLLKNLFTRL…KEHFLIISES (101 aa)). Residues 185-186 (LL), 210-211 (TF), Arg-269, Gly-287, and Gln-296 each bind ATP.

The protein belongs to the ThiI family.

Its subcellular location is the cytoplasm. It carries out the reaction [ThiI sulfur-carrier protein]-S-sulfanyl-L-cysteine + a uridine in tRNA + 2 reduced [2Fe-2S]-[ferredoxin] + ATP + H(+) = [ThiI sulfur-carrier protein]-L-cysteine + a 4-thiouridine in tRNA + 2 oxidized [2Fe-2S]-[ferredoxin] + AMP + diphosphate. The enzyme catalyses [ThiS sulfur-carrier protein]-C-terminal Gly-Gly-AMP + S-sulfanyl-L-cysteinyl-[cysteine desulfurase] + AH2 = [ThiS sulfur-carrier protein]-C-terminal-Gly-aminoethanethioate + L-cysteinyl-[cysteine desulfurase] + A + AMP + 2 H(+). It functions in the pathway cofactor biosynthesis; thiamine diphosphate biosynthesis. In terms of biological role, catalyzes the ATP-dependent transfer of a sulfur to tRNA to produce 4-thiouridine in position 8 of tRNAs, which functions as a near-UV photosensor. Also catalyzes the transfer of sulfur to the sulfur carrier protein ThiS, forming ThiS-thiocarboxylate. This is a step in the synthesis of thiazole, in the thiamine biosynthesis pathway. The sulfur is donated as persulfide by IscS. The sequence is that of Probable tRNA sulfurtransferase from Mycoplasma pneumoniae (strain ATCC 29342 / M129 / Subtype 1) (Mycoplasmoides pneumoniae).